Consider the following 408-residue polypeptide: NADH-quinone oxidoreductase subunit D (408 aa).

It belongs to the complex I 49 kDa subunit family. As to quaternary structure, NDH-1 is composed of 14 different subunits. Subunits NuoB, C, D, E, F, and G constitute the peripheral sector of the complex.

Its subcellular location is the cell inner membrane. It catalyses the reaction a quinone + NADH + 5 H(+)(in) = a quinol + NAD(+) + 4 H(+)(out). In terms of biological role, NDH-1 shuttles electrons from NADH, via FMN and iron-sulfur (Fe-S) centers, to quinones in the respiratory chain. The immediate electron acceptor for the enzyme in this species is believed to be ubiquinone. Couples the redox reaction to proton translocation (for every two electrons transferred, four hydrogen ions are translocated across the cytoplasmic membrane), and thus conserves the redox energy in a proton gradient. This chain is NADH-quinone oxidoreductase subunit D, found in Campylobacter jejuni subsp. jejuni serotype O:6 (strain 81116 / NCTC 11828).